The primary structure comprises 288 residues: Syntaxin-1A (288 aa).

Over 1–265 the chain is Cytoplasmic; that stretch reads MKDRTQELRT…KYQSKARRKK (265 aa). Phosphoserine occurs at positions 14, 64, and 95. Residues 68 to 109 are a coiled coil; it reads DEKTKEELEELMSDIKKTANKVRSKLKSIEQSIEQEEGLNRS. Phosphoserine; by DAPK1 is present on serine 188. A t-SNARE coiled-coil homology domain is found at 192-254; that stretch reads LSEIETRHSE…ERAVSDTKKA (63 aa). Glycyl lysine isopeptide (Lys-Gly) (interchain with G-Cter in SUMO) cross-links involve residues lysine 252, lysine 253, and lysine 256. Residues 266–286 traverse the membrane as a helical; Anchor for type IV membrane protein segment; the sequence is IMIIICCVILGIVIASTVGGI. Residues 287-288 are Extracellular-facing; it reads FA.

It belongs to the syntaxin family. Part of the SNARE core complex containing SNAP25, VAMP2 and STX1A; this complex constitutes the basic catalytic machinery of the complex neurotransmitter release apparatus. The SNARE complex interacts with CPLX1. Interacts with STXBP1. The interaction with STXBP1 promotes assembly of the SNARE complex. Interacts (via C-terminus) with KCNB1 (via C-terminus); the interaction increases in a calcium-dependent manner and induces a pore-independent enhancement of exocytosis in neuroendocrine cells, chromaffin cells, pancreatic beta cells and from the soma of dorsal root ganglia (DRG) neurons. Interacts with SYTL4. Interacts with STXBP6. Interacts with PLCL1 (via C2 domain). Interacts with OTOF. Interacts with LGI3. Interacts (via the H3 domain) with SLC6A4 (via the N-terminus); this interaction regulates SLC4A6 channel conductance in thalamocortical neurons. Interacts with SYT6 and SYT8; the interaction is Ca(2+)-dependent. Interacts with VAMP8. Interacts with SNAP23. Interacts with VAPA and SYBU. Interacts with PRRT2. Interacts with SEPT8. Interacts with STXBP5L. Interacts with synaptotagmin-1/SYT1. Interacts with SEPTIN5; in the cerebellar cortex. Interacts with SEPTIN4; in the striatum. Post-translationally, phosphorylated by CK2. Phosphorylation at Ser-188 by DAPK1 significantly decreases its interaction with STXBP1. Sumoylated, sumoylation is required for regulation of synaptic vesicle endocytosis. Highly expressed in embryonic spinal cord and ganglia and in adult cerebellum and cerebral cortex. As to expression, expressed in heart, liver, fat, skeletal muscle, kidney and brain.

The protein resides in the cytoplasmic vesicle. The protein localises to the secretory vesicle. It is found in the synaptic vesicle membrane. Its subcellular location is the synapse. It localises to the synaptosome. The protein resides in the cell membrane. The protein localises to the secreted. In terms of biological role, plays an essential role in hormone and neurotransmitter calcium-dependent exocytosis and endocytosis. Part of the SNARE (Soluble NSF Attachment Receptor) complex composed of SNAP25, STX1A and VAMP2 which mediates the fusion of synaptic vesicles with the presynaptic plasma membrane. STX1A and SNAP25 are localized on the plasma membrane while VAMP2 resides in synaptic vesicles. The pairing of the three SNAREs from the N-terminal SNARE motifs to the C-terminal anchors leads to the formation of the SNARE complex, which brings membranes into close proximity and results in final fusion. Participates in the calcium-dependent regulation of acrosomal exocytosis in sperm. Also plays an important role in the exocytosis of hormones such as insulin or glucagon-like peptide 1 (GLP-1). The chain is Syntaxin-1A (STX1A) from Homo sapiens (Human).